A 108-amino-acid polypeptide reads, in one-letter code: Small ribosomal subunit protein eS25 (108 aa).

Residues 1–36 (MAPKKAQAPPPSSKPAKSGGGKQKKKKWSKGKQKEK) form a disordered region. Over residues 22–31 (KQKKKKWSKG) the composition is skewed to basic residues.

The protein belongs to the eukaryotic ribosomal protein eS25 family.

This chain is Small ribosomal subunit protein eS25 (RPS25), found in Solanum lycopersicum (Tomato).